The sequence spans 143 residues: Large ribosomal subunit protein uL13 (143 aa).

Belongs to the universal ribosomal protein uL13 family. As to quaternary structure, part of the 50S ribosomal subunit.

Its function is as follows. This protein is one of the early assembly proteins of the 50S ribosomal subunit, although it is not seen to bind rRNA by itself. It is important during the early stages of 50S assembly. The sequence is that of Large ribosomal subunit protein uL13 from Variovorax paradoxus (strain S110).